The following is a 196-amino-acid chain: Probable GTP-binding protein EngB (196 aa).

The EngB-type G domain maps to 24–196; it reads ELSEVALSGR…IWNLIEPYIS (173 aa). Residues 32 to 39, 59 to 63, 77 to 80, 144 to 147, and 176 to 178 contribute to the GTP site; these read GRSNVGKS, GKTQT, DVPG, TKED, and YSS. The Mg(2+) site is built by Ser-39 and Thr-61.

It belongs to the TRAFAC class TrmE-Era-EngA-EngB-Septin-like GTPase superfamily. EngB GTPase family. Mg(2+) serves as cofactor.

In terms of biological role, necessary for normal cell division and for the maintenance of normal septation. In Staphylococcus aureus (strain MW2), this protein is Probable GTP-binding protein EngB.